The chain runs to 466 residues: Soluble pyridine nucleotide transhydrogenase (466 aa).

36–45 (ERYHNVGGGC) serves as a coordination point for FAD.

It belongs to the class-I pyridine nucleotide-disulfide oxidoreductase family. FAD is required as a cofactor.

It is found in the cytoplasm. It catalyses the reaction NAD(+) + NADPH = NADH + NADP(+). Conversion of NADPH, generated by peripheral catabolic pathways, to NADH, which can enter the respiratory chain for energy generation. This is Soluble pyridine nucleotide transhydrogenase from Salmonella gallinarum (strain 287/91 / NCTC 13346).